The sequence spans 459 residues: N,N-dimethyl phenylurea N-demethylase subunit alpha (459 aa).

Positions 55-166 (WVFVAHETEI…VESYHGFIFT (112 aa)) constitute a Rieske domain. [2Fe-2S] cluster is bound by residues cysteine 97, histidine 99, cysteine 117, and histidine 120. 3 residues coordinate Fe cation: histidine 225, histidine 230, and aspartate 386.

It belongs to the bacterial ring-hydroxylating dioxygenase alpha subunit family. PdmA (subunit alpha) and PdmB (subunit beta) form the oxygenase component of a bacterial Rieske non-heme iron oxygenase (RO) system. The cofactor is [2Fe-2S] cluster. It depends on Fe cation as a cofactor.

The enzyme catalyses a 1,1-dimethyl-3-phenylurea + 2 reduced [2Fe-2S]-[ferredoxin] + O2 + 2 H(+) = a 1-methyl-3-phenylurea + formaldehyde + 2 oxidized [2Fe-2S]-[ferredoxin] + H2O. The catalysed reaction is isoproturon + 2 reduced [2Fe-2S]-[ferredoxin] + O2 + 2 H(+) = 1-methyl-3-[4-(propan-2-yl)phenyl]urea + formaldehyde + 2 oxidized [2Fe-2S]-[ferredoxin] + H2O. It carries out the reaction chlorotoluron + 2 reduced [2Fe-2S]-[ferredoxin] + O2 + 2 H(+) = 3-(3-chloro-4-methylphenyl)-1-methylurea + formaldehyde + 2 oxidized [2Fe-2S]-[ferredoxin] + H2O. It catalyses the reaction metoxuron + 2 reduced [2Fe-2S]-[ferredoxin] + O2 + 2 H(+) = 3-(3-chloro-4-methoxylphenyl)-1-methylurea + formaldehyde + 2 oxidized [2Fe-2S]-[ferredoxin] + H2O. The enzyme catalyses monuron + 2 reduced [2Fe-2S]-[ferredoxin] + O2 + 2 H(+) = 3-(4-chlorophenyl)-1-methylurea + formaldehyde + 2 oxidized [2Fe-2S]-[ferredoxin] + H2O. The catalysed reaction is diuron + 2 reduced [2Fe-2S]-[ferredoxin] + O2 + 2 H(+) = 3-(3,4-dichlorophenyl)-1-methylurea + formaldehyde + 2 oxidized [2Fe-2S]-[ferredoxin] + H2O. It carries out the reaction fluometuron + 2 reduced [2Fe-2S]-[ferredoxin] + O2 + 2 H(+) = 3-[3-(trifluoromethyl)phenyl]-1-methylurea + formaldehyde + 2 oxidized [2Fe-2S]-[ferredoxin] + H2O. It catalyses the reaction fenuron + 2 reduced [2Fe-2S]-[ferredoxin] + O2 + 2 H(+) = 1-methyl-3-phenylurea + formaldehyde + 2 oxidized [2Fe-2S]-[ferredoxin] + H2O. It functions in the pathway xenobiotic degradation. Activity is stimulated in vitro by coexpression of a [3Fe-4S]-type ferredoxin. Functionally, part of the multicomponent N,N-dimethyl phenylurea N-demethylase responsible for the initial N-demethylation step during the bacterial metabolism of N,N-dimethyl-substituted phenylurea herbicides. Catalyzes the mono-N-demethylation of N,N-dimethyl-substituted phenylurea herbicides to their mono-N-demethylated derivatives. Is active on isoproturon (IPU), chlorotoluron, metoxuron, monoron, diuron, fluometuron and fenuron, but cannot transform the N-methoxy-N-methyl-substituted herbicides. This is N,N-dimethyl phenylurea N-demethylase subunit alpha from Sphingobium sp. (strain YBL2).